Here is a 415-residue protein sequence, read N- to C-terminus: Serine hydroxymethyltransferase (415 aa).

(6S)-5,6,7,8-tetrahydrofolate contacts are provided by residues L117 and 121–123 (GHL). The residue at position 226 (K226) is an N6-(pyridoxal phosphate)lysine.

This sequence belongs to the SHMT family. As to quaternary structure, homodimer. Pyridoxal 5'-phosphate serves as cofactor.

It is found in the cytoplasm. It catalyses the reaction (6R)-5,10-methylene-5,6,7,8-tetrahydrofolate + glycine + H2O = (6S)-5,6,7,8-tetrahydrofolate + L-serine. The protein operates within one-carbon metabolism; tetrahydrofolate interconversion. It participates in amino-acid biosynthesis; glycine biosynthesis; glycine from L-serine: step 1/1. Functionally, catalyzes the reversible interconversion of serine and glycine with tetrahydrofolate (THF) serving as the one-carbon carrier. This reaction serves as the major source of one-carbon groups required for the biosynthesis of purines, thymidylate, methionine, and other important biomolecules. Also exhibits THF-independent aldolase activity toward beta-hydroxyamino acids, producing glycine and aldehydes, via a retro-aldol mechanism. This is Serine hydroxymethyltransferase from Dehalococcoides mccartyi (strain ATCC BAA-2266 / KCTC 15142 / 195) (Dehalococcoides ethenogenes (strain 195)).